Reading from the N-terminus, the 654-residue chain is Collagen alpha-1(XXV) chain (654 aa).

Positions 1–26 (MLLKKHAGKGGGREPRSEDPTPAEQH) are disordered. Over 1-33 (MLLKKHAGKGGGREPRSEDPTPAEQHCARTMPP) the chain is Cytoplasmic. Residues 34-54 (CAVLAALLSVVAVVSCLYLGV) form a helical; Signal-anchor for type II membrane protein membrane-spanning segment. The Extracellular segment spans residues 55–654 (KTNDLQARIA…GLPMPGCWQK (600 aa)). Residue E113 is modified to Pyrrolidone carboxylic acid (Glu). Residues 116–168 (SECNCPAGPPGKRGKRGRRGESGPPGQPGPQGPPGPKGDKGEQGDQGPRMVFP) are disordered. In terms of domain architecture, Collagen-like 1 spans 121 to 164 (PAGPPGKRGKRGRRGESGPPGQPGPQGPPGPKGDKGEQGDQGPR). The segment covering 140 to 151 (PGQPGPQGPPGP) has biased composition (pro residues). The tract at residues 181-188 (LIKRRLIK) is interaction with amyloid-beta peptide. 2 disordered regions span residues 189-426 (GDQG…QGAT) and 445-654 (LTVT…CWQK). 5 Collagen-like domains span residues 192 to 247 (GQAG…QKGS), 249 to 308 (GAPG…PGSS), 311 to 370 (GIKG…AGPP), 372 to 425 (RGER…DQGA), and 447 to 505 (VTGP…PGLP). The span at 196 to 208 (PPGPPGPPGPRGP) shows a compositional bias: pro residues. Residues 230–245 (PGEQGLMGPLGPPGQK) show a composition bias toward low complexity. A compositionally biased stretch (basic and acidic residues) spans 280 to 290 (EPGEQGEKGDA). A compositionally biased stretch (low complexity) spans 336 to 358 (LPGIKGEPGFIGPQGEPGLPGLP). 2 stretches are compositionally biased toward basic and acidic residues: residues 361 to 377 (KGER…ERGE) and 398 to 407 (SKGDRGEKGD). Residues 457–466 (QGLQGPKGEQ) are compositionally biased toward low complexity. Residues 494–503 (GEKGGIGLPG) show a composition bias toward gly residues. Positions 517–527 (SGMPGPQGPSI) are enriched in low complexity. Over residues 528–543 (IGPPGPPGPHGPPGPM) the composition is skewed to pro residues. The 60-residue stretch at 571-630 (GEKGAMGEPGPRGPYGLPGKDGEPGLDGFPGPRGEKGDLGEKGEKGFRGVKGEKGEPGQP) folds into the Collagen-like 7 domain. A compositionally biased stretch (basic and acidic residues) spans 603–626 (RGEKGDLGEKGEKGFRGVKGEKGE).

In terms of assembly, forms homodimers and homotrimers. Binds to the fibrillized forms of amyloid-beta protein 40 (beta-APP40) and amyloid-beta protein 42 (beta-APP42). Found associated with beta-APP42 more frequently than with beta-APP40. Undergoes proteolytic cleavage by furin protease to yield the soluble collagen-like Alzheimer amyloid plaque component. In terms of processing, glycosylated. Post-translationally, hydroxylated on 11% of proline residues and 49% of lysine residues. In terms of tissue distribution, expressed predominantly in brain. Deposited preferentially in primitive or neuritic amyloid plaques which are typical of Alzheimer disease.

Its subcellular location is the membrane. Its function is as follows. Inhibits fibrillization of amyloid-beta peptide during the elongation phase. Has also been shown to assemble amyloid fibrils into protease-resistant aggregates. Binds heparin. The chain is Collagen alpha-1(XXV) chain from Homo sapiens (Human).